A 330-amino-acid polypeptide reads, in one-letter code: Phosphate acyltransferase (330 aa).

Belongs to the PlsX family. As to quaternary structure, homodimer. Probably interacts with PlsY.

The protein localises to the cytoplasm. The catalysed reaction is a fatty acyl-[ACP] + phosphate = an acyl phosphate + holo-[ACP]. It participates in lipid metabolism; phospholipid metabolism. In terms of biological role, catalyzes the reversible formation of acyl-phosphate (acyl-PO(4)) from acyl-[acyl-carrier-protein] (acyl-ACP). This enzyme utilizes acyl-ACP as fatty acyl donor, but not acyl-CoA. The protein is Phosphate acyltransferase of Bacillus licheniformis (strain ATCC 14580 / DSM 13 / JCM 2505 / CCUG 7422 / NBRC 12200 / NCIMB 9375 / NCTC 10341 / NRRL NRS-1264 / Gibson 46).